Reading from the N-terminus, the 434-residue chain is Maltotriose-binding protein (434 aa).

Positions 1–20 (MRRATYAFALLAILVLGVVA) are cleaved as a signal peptide. The tract at residues 28–52 (TTTPTQTSPATQPTTTQTPTQTETQ) is disordered. Residues 29–52 (TTPTQTSPATQPTTTQTPTQTETQ) are compositionally biased toward low complexity.

It belongs to the bacterial solute-binding protein 1 family.

Functionally, involved in an abc transport system for maltotriose. Binds maltotriose much more tightly than maltose. The polypeptide is Maltotriose-binding protein (malE) (Pyrococcus furiosus (strain ATCC 43587 / DSM 3638 / JCM 8422 / Vc1)).